Consider the following 189-residue polypeptide: Elongation factor P 2 (189 aa).

This sequence belongs to the elongation factor P family.

The protein localises to the cytoplasm. The protein operates within protein biosynthesis; polypeptide chain elongation. Involved in peptide bond synthesis. Stimulates efficient translation and peptide-bond synthesis on native or reconstituted 70S ribosomes in vitro. Probably functions indirectly by altering the affinity of the ribosome for aminoacyl-tRNA, thus increasing their reactivity as acceptors for peptidyl transferase. The sequence is that of Elongation factor P 2 (efp2) from Lactobacillus johnsonii (strain CNCM I-12250 / La1 / NCC 533).